Reading from the N-terminus, the 67-residue chain is Small ribosomal subunit protein bS21 (67 aa).

A compositionally biased stretch (basic and acidic residues) spans 37 to 52 (EKPSERKAREAAEAVR). The tract at residues 37 to 67 (EKPSERKAREAAEAVRRARKMERKRLEREGF) is disordered.

It belongs to the bacterial ribosomal protein bS21 family.

The chain is Small ribosomal subunit protein bS21 from Gluconacetobacter diazotrophicus (strain ATCC 49037 / DSM 5601 / CCUG 37298 / CIP 103539 / LMG 7603 / PAl5).